Reading from the N-terminus, the 366-residue chain is Glucose 1-dehydrogenase 2 (366 aa).

Cys-39 is a Zn(2+) binding site. Residue Ser-41 coordinates substrate. Residues His-66 and Glu-67 each coordinate Zn(2+). Substrate contacts are provided by Asn-90, Glu-116, Gln-152, and Asp-156. Gln-152 serves as a coordination point for Zn(2+). Residues 212-214 (NRR), 277-279 (FGF), 305-307 (LIN), and Lys-354 each bind NADP(+). Asn-307 lines the substrate pocket.

The protein belongs to the zinc-containing alcohol dehydrogenase family. Glucose 1-dehydrogenase subfamily. The cofactor is Zn(2+).

The catalysed reaction is D-glucose + NAD(+) = D-glucono-1,5-lactone + NADH + H(+). It catalyses the reaction D-glucose + NADP(+) = D-glucono-1,5-lactone + NADPH + H(+). In terms of biological role, catalyzes the NAD(P)(+)-dependent oxidation of D-glucose to D-gluconate via gluconolactone. Can utilize both NAD(+) and NADP(+) as electron acceptor. Is involved in the degradation of glucose through a non-phosphorylative variant of the Entner-Doudoroff pathway. The polypeptide is Glucose 1-dehydrogenase 2 (Caldivirga maquilingensis (strain ATCC 700844 / DSM 13496 / JCM 10307 / IC-167)).